A 222-amino-acid chain; its full sequence is 2-C-methyl-D-erythritol 4-phosphate cytidylyltransferase (222 aa).

This sequence belongs to the IspD/TarI cytidylyltransferase family. IspD subfamily.

It catalyses the reaction 2-C-methyl-D-erythritol 4-phosphate + CTP + H(+) = 4-CDP-2-C-methyl-D-erythritol + diphosphate. Its pathway is isoprenoid biosynthesis; isopentenyl diphosphate biosynthesis via DXP pathway; isopentenyl diphosphate from 1-deoxy-D-xylulose 5-phosphate: step 2/6. Catalyzes the formation of 4-diphosphocytidyl-2-C-methyl-D-erythritol from CTP and 2-C-methyl-D-erythritol 4-phosphate (MEP). This is 2-C-methyl-D-erythritol 4-phosphate cytidylyltransferase from Porphyromonas gingivalis (strain ATCC BAA-308 / W83).